We begin with the raw amino-acid sequence, 236 residues long: SERTA domain-containing protein 1 (236 aa).

Residues 38–85 form the SERTA domain; the sequence is PTVASSSLFDLSVVKLHHSLRQSEPDLRHLVLVVNTLRRIQASMEPAP. The segment at 190 to 211 is disordered; sequence ASEGLKPGPENGPAKEEPPELD.

Interacts with the PHD-bromodomain of TIF1, TRIM28/TIF1B and p300/CBP. Interacts with E2F1 and TFDP1; modulates transactivation activity of TFDP1/E2F complexes. Also interacts with CDK4. Polyubiquitinated, which promotes proteasomal degradation. As to expression, detected at in testis, lung and, at lower levels, in muscle, liver, spleen, brain and heart.

Acts at E2F-responsive promoters as coregulator to integrate signals provided by PHD- and/or bromodomain-containing transcription factors. Stimulates E2F1/TFDP1 transcriptional activity. Renders the activity of cyclin D1/CDK4 resistant to the inhibitory effects of CDKN2A/p16INK4A. The chain is SERTA domain-containing protein 1 (Sertad1) from Mus musculus (Mouse).